Consider the following 298-residue polypeptide: Elongation factor Ts (298 aa).

The involved in Mg(2+) ion dislocation from EF-Tu stretch occupies residues 79-82 (TDFV).

This sequence belongs to the EF-Ts family.

The protein resides in the cytoplasm. Functionally, associates with the EF-Tu.GDP complex and induces the exchange of GDP to GTP. It remains bound to the aminoacyl-tRNA.EF-Tu.GTP complex up to the GTP hydrolysis stage on the ribosome. This Cereibacter sphaeroides (strain ATCC 17029 / ATH 2.4.9) (Rhodobacter sphaeroides) protein is Elongation factor Ts.